A 341-amino-acid polypeptide reads, in one-letter code: Ribosomal RNA small subunit methyltransferase H (341 aa).

S-adenosyl-L-methionine is bound by residues 47–49 (GGY), Asp-64, Phe-91, Asp-109, and Gln-116.

Belongs to the methyltransferase superfamily. RsmH family.

The protein resides in the cytoplasm. It catalyses the reaction cytidine(1402) in 16S rRNA + S-adenosyl-L-methionine = N(4)-methylcytidine(1402) in 16S rRNA + S-adenosyl-L-homocysteine + H(+). Functionally, specifically methylates the N4 position of cytidine in position 1402 (C1402) of 16S rRNA. This chain is Ribosomal RNA small subunit methyltransferase H, found in Rhizobium leguminosarum bv. trifolii (strain WSM1325).